Reading from the N-terminus, the 254-residue chain is Hemin import ATP-binding protein HmuV (254 aa).

The ABC transporter domain occupies 2–239 (LNINQVNINL…DTLSQVWHYD (238 aa)). 34–41 (GPNGAGKS) is a binding site for ATP.

It belongs to the ABC transporter superfamily. Heme (hemin) importer (TC 3.A.1.14.5) family. In terms of assembly, the complex is composed of two ATP-binding proteins (HmuV), two transmembrane proteins (HmuU) and a solute-binding protein (HmuT).

The protein localises to the cell inner membrane. Functionally, part of the ABC transporter complex HmuTUV involved in hemin import. Responsible for energy coupling to the transport system. The chain is Hemin import ATP-binding protein HmuV from Shewanella denitrificans (strain OS217 / ATCC BAA-1090 / DSM 15013).